The chain runs to 465 residues: MMLLTLLILSSVGLAAAADPSLFSENDYSPDNIVNRDVLIVGGGAAGTHAAVRLKDLGKSFTLVEKSSVLGGHTHTYIDPTTGTPVEFGVHSFGNTSDTRDFFARFEIPLVDFVPARFPVHYIDFNTGDAVAVALDTNVTGYLDQVEKYPSLAYGWLTSFPVPSDLLLSFGDFVNKYSLQKIVYTIYYLGVGIGNILQQLTITVMNSVGVGILSGLQGVPGGAVVPAAGNNHAIFDKALAELRADILLNSHVVAASRPANNSGVKVVVQTPNSRKLVLAKRIIVAVLTQPENMNVFSPDEREARLFSQLKGQAFYVGLVTNTGLPVNQSYYNAASSEPDNVPLLPKTYNIQSTVLPGVFWWLYGSETALTEAAVKTAVTSQIATVRRALNVPAPAGSPQFLAFGNHTPTHVTVPAEAIASGFYRDLYGLQGYRNTWYTGAQFIDSASGIWNLTNAVVLPGLLTGL.

A signal peptide spans 1–17 (MMLLTLLILSSVGLAAA). 4 N-linked (GlcNAc...) asparagine glycosylation sites follow: Asn-95, Asn-138, Asn-260, and Asn-327. Asp-444 carries GPI-anchor amidated aspartate lipidation. Positions 445-465 (SASGIWNLTNAVVLPGLLTGL) are cleaved as a propeptide — removed in mature form. Asn-451 carries N-linked (GlcNAc...) asparagine glycosylation.

The protein belongs to the beta-cyclopiazonate dehydrogenase family. The cofactor is FAD.

Its subcellular location is the cell membrane. The protein operates within secondary metabolite biosynthesis. Its function is as follows. FAD-dependent oxidoreductase; part of the gene cluster that mediates the biosynthesis of azaphilone pigments (MonAzPs), a complex mixture of compounds with a common azaphilone skeleton very widely used as food colorants. Within the pathway, pigF desaturates C6(7) to afford the orange and red pigments from yellow pigments. The first step of the pathway is performed by the nrPKS pigA that forms the hexaketide precursor from successive condensations of five malonyl-CoA units, with a simple acetyl-CoA starter unit. The role of esterase pigG is not clear, but it may play at most a supplementary role in the formation of the benzaldehyde produced by the pigA nrPKS. This very reactive benzaldehyde is intercepted by the pigC ketoreductase that to provide the first stable enzyme-free MonAzPs intermediate, 6-(4-hydroxy-2-oxopentyl)-3-methyl-2,4-dioxocyclohexane carbaldehyde, also known as M7PKS-1. The FAD-dependent monooxygenase pigN hydroxylates M7PKS-1 at C-4, which triggers the formation of the pyran ring. PigJ, pigK and pigD are involved in the acetylation of the pyran ring. PigJ and pigK form the two subunits of a dedicated fungal FAS that produces the side chain fatty acyl moiety of MonAzPs and pigD transfers the fatty acyl chain to the C-4 alcohol. PigM and pigO are involved in the elimination of the omega-1 alcohol. PigM acts as an O-acetyltransferase that synthesizes the putative O-11 acetyl intermediate whereas pigO eliminates acetic acid to yield an intermediate with a C10(11) double bond. The dehydration of the C-11 alcohol followed by the reduction of the C6(7) double bond by the NAD(P)H-dependent oxidoreductase pigE increases the electrophilicity of the C-5 ketone of the resulting acyl benzopyran. This in turn sets up the C-5 ketone for an intramolecular Knoevenagel aldol condensation with the C-20 enol of the side chain. This condensation affords the characteristic linear tricyclic carbon skeletons of the yellow pigments that serve as the common precursors for the classical yellow pigments monascin and ankaflavin, orange pigments rubopunctatin and monascorubrin, and red pigments ribropunctamine and monascorubramine. The FAD-dependent oxidoreductase pigF is especially invoved in the biosynthesis of orange and red pigments via desaturation of C6(7). This chain is FAD-dependent oxidoreductase pigF, found in Monascus ruber (Mold).